A 283-amino-acid chain; its full sequence is uncharacterized protein (283 aa).

This is an uncharacterized protein from Caenorhabditis elegans.